A 176-amino-acid polypeptide reads, in one-letter code: Ribosome rescue factor SmrB (176 aa).

The disordered stretch occupies residues 29–51 (TIIQQPKKNTKQKEIKRSNREAS). The span at 39–51 (KQKEIKRSNREAS) shows a compositional bias: basic and acidic residues. The region spanning 97–172 (LDMHGMTQQE…GDGALLVLLS (76 aa)) is the Smr domain.

This sequence belongs to the SmrB family. Associates with collided ribosomes, but not with correctly translating polysomes.

Its function is as follows. Acts as a ribosome collision sensor. Detects stalled/collided disomes (pairs of ribosomes where the leading ribosome is stalled and a second ribosome has collided with it) and endonucleolytically cleaves mRNA at the 5' boundary of the stalled ribosome. Stalled/collided disomes form a new interface (primarily via the 30S subunits) that binds SmrB. Cleaved mRNA becomes available for tmRNA ligation, leading to ribosomal subunit dissociation and rescue of stalled ribosomes. The sequence is that of Ribosome rescue factor SmrB from Vibrio parahaemolyticus serotype O3:K6 (strain RIMD 2210633).